The following is an 800-amino-acid chain: Protein MICRORCHIDIA 4 (800 aa).

Disordered stretches follow at residues 1–76 and 552–702; these read MEPI…ARSD and AKRQ…RTLS. The segment covering 9–18 has biased composition (polar residues); sequence NPVTTSTLST. The segment covering 36–47 has biased composition (low complexity); that stretch reads ELSSSNEGSELG. Basic and acidic residues-rich tracts occupy residues 559–578 and 628–641; these read SAKD…EFDP and VSKD…EKGG. The segment covering 666–675 has biased composition (acidic residues); it reads NSDDDYDCDS. Positions 699–766 form a coiled coil; that stretch reads RTLSQLEQEN…QASLIDVFAE (68 aa). 2 consecutive short sequence motifs (nuclear localization signal) follow at residues 716-723 and 735-742; these read DKKEEVFL and LRKTLEAE.

Belongs to the MORC ATPase protein family. Homodimer and heterodimer. Component of an RNA-directed DNA methylation (RdDM) complex. Forms homomeric complexes. Mg(2+) is required as a cofactor. The cofactor is Mn(2+).

It localises to the nucleus. Its function is as follows. Exhibits ATPase activity. Binds DNA/RNA in a non-specific manner and exhibits endonuclease activity. Probably involved in DNA repair. Involved in RNA-directed DNA methylation (RdDM) as a component of the RdDM machinery and required for gene silencing. May also be involved in the regulation of chromatin architecture to maintain gene silencing. Together with MORC7, acts to suppress a wide set of non-methylated protein-coding genes, especially involved in pathogen response. Positive regulator of defense against the oomycete Hyaloperonospora arabidopsidis (Hpa). The protein is Protein MICRORCHIDIA 4 of Arabidopsis thaliana (Mouse-ear cress).